The primary structure comprises 110 residues: Large ribosomal subunit protein uL24 (110 aa).

The protein belongs to the universal ribosomal protein uL24 family. In terms of assembly, part of the 50S ribosomal subunit.

Functionally, one of two assembly initiator proteins, it binds directly to the 5'-end of the 23S rRNA, where it nucleates assembly of the 50S subunit. In terms of biological role, one of the proteins that surrounds the polypeptide exit tunnel on the outside of the subunit. The chain is Large ribosomal subunit protein uL24 from Caldicellulosiruptor saccharolyticus (strain ATCC 43494 / DSM 8903 / Tp8T 6331).